The following is a 288-amino-acid chain: Xyloglucan endotransglucosylase protein 8 (288 aa).

The first 25 residues, Met1–Ser25, serve as a signal peptide directing secretion. Residues Ser26 to Tyr215 enclose the GH16 domain. Residue Glu102 is the Nucleophile of the active site. Glu106 functions as the Proton donor in the catalytic mechanism. Residue Glu106 coordinates xyloglucan. N-linked (GlcNAc...) asparagine glycosylation occurs at Asn110. Xyloglucan-binding positions include His119–Asn121, Glu129–Glu131, Glu194–Trp195, and Gly199. Disulfide bonds link Cys224-Cys233 and Cys268-Cys282. Arg273 contributes to the xyloglucan binding site.

It belongs to the glycosyl hydrolase 16 family. XTH group 2 subfamily. Contains at least one intrachain disulfide bond essential for its enzymatic activity. As to expression, highly expressed in mature fruits. Very low expression in leaves, flowers, calyces and stems.

Its subcellular location is the secreted. It is found in the cell wall. It localises to the extracellular space. The protein localises to the apoplast. It catalyses the reaction breaks a beta-(1-&gt;4) bond in the backbone of a xyloglucan and transfers the xyloglucanyl segment on to O-4 of the non-reducing terminal glucose residue of an acceptor, which can be a xyloglucan or an oligosaccharide of xyloglucan.. In terms of biological role, catalyzes xyloglucan endotransglycosylation (XET). Cleaves and religates xyloglucan polymers. Does not catalyze xyloglucan endohydrolysis (XEH). Overexpression in Arabidopsis transgenic plants causes accelerated dark-induced leaf senescence and higher lipid peroxidation of the leaf cells. Overexpression in transgenic tomato plants promotes fruit ripening and softening. Probably involved in cell wall restructuring during postharvest fruit softening. The chain is Xyloglucan endotransglucosylase protein 8 from Diospyros kaki (Kaki persimmon).